An 85-amino-acid polypeptide reads, in one-letter code: Large ribosomal subunit protein eL34 (85 aa).

The protein belongs to the eukaryotic ribosomal protein eL34 family.

The protein is Large ribosomal subunit protein eL34 of Saccharolobus islandicus (strain M.16.27) (Sulfolobus islandicus).